The following is a 389-amino-acid chain: S-adenosylmethionine synthase 2 (389 aa).

H17 is an ATP binding site. D19 provides a ligand contact to Mg(2+). A K(+)-binding site is contributed by E45. E58 and Q102 together coordinate L-methionine. Positions 102–112 are flexible loop; sequence QSADIAVGVDA. Residues 166-168, 231-232, D240, 246-247, A263, and K267 contribute to the ATP site; these read DSK, RF, and RK. D240 contacts L-methionine. L-methionine is bound at residue K271.

It belongs to the AdoMet synthase family. In terms of assembly, homotetramer; dimer of dimers. Mg(2+) serves as cofactor. K(+) is required as a cofactor.

The protein localises to the cytoplasm. The enzyme catalyses L-methionine + ATP + H2O = S-adenosyl-L-methionine + phosphate + diphosphate. It functions in the pathway amino-acid biosynthesis; S-adenosyl-L-methionine biosynthesis; S-adenosyl-L-methionine from L-methionine: step 1/1. In terms of biological role, catalyzes the formation of S-adenosylmethionine (AdoMet) from methionine and ATP. The overall synthetic reaction is composed of two sequential steps, AdoMet formation and the subsequent tripolyphosphate hydrolysis which occurs prior to release of AdoMet from the enzyme. The polypeptide is S-adenosylmethionine synthase 2 (Rhodospirillum rubrum (strain ATCC 11170 / ATH 1.1.1 / DSM 467 / LMG 4362 / NCIMB 8255 / S1)).